Reading from the N-terminus, the 81-residue chain is Large ribosomal subunit protein bL31 (81 aa).

The Zn(2+) site is built by Cys16, Cys18, Cys38, and Cys41.

It belongs to the bacterial ribosomal protein bL31 family. Type A subfamily. Part of the 50S ribosomal subunit. Zn(2+) is required as a cofactor.

Its function is as follows. Binds the 23S rRNA. This is Large ribosomal subunit protein bL31 from Mycobacterium sp. (strain JLS).